The chain runs to 195 residues: Imidazoleglycerol-phosphate dehydratase (195 aa).

The protein belongs to the imidazoleglycerol-phosphate dehydratase family.

The protein localises to the cytoplasm. The catalysed reaction is D-erythro-1-(imidazol-4-yl)glycerol 3-phosphate = 3-(imidazol-4-yl)-2-oxopropyl phosphate + H2O. It functions in the pathway amino-acid biosynthesis; L-histidine biosynthesis; L-histidine from 5-phospho-alpha-D-ribose 1-diphosphate: step 6/9. In Ruegeria pomeroyi (strain ATCC 700808 / DSM 15171 / DSS-3) (Silicibacter pomeroyi), this protein is Imidazoleglycerol-phosphate dehydratase.